A 392-amino-acid chain; its full sequence is Zinc finger protein CONSTANS-LIKE 7 (392 aa).

Zn(2+) is bound by residues C22, C25, C46, and H51. A B box-type; atypical zinc finger spans residues 22–65; sequence CDACMKRSRASWYCPADDAFLCQSCDASIHSANHLAKRHERVRL. Residues 226–254 are a coiled coil; it reads KEENKVGFEINCKDLKRVKDEDEEEEEAK. Disordered stretches follow at residues 246-271 and 326-346; these read EDEE…SNDK and SDGS…GERE. Positions 259–271 are enriched in basic and acidic residues; sequence GSKDSDREASNDK. The 43-residue stretch at 345–387 folds into the CCT domain; the sequence is REARVLRYKEKRRTRLFSKKIRYEVRKLNAEQRPRIKGRFVKR.

This sequence belongs to the CONSTANS family.

The protein resides in the nucleus. The chain is Zinc finger protein CONSTANS-LIKE 7 (COL7) from Arabidopsis thaliana (Mouse-ear cress).